The following is a 195-amino-acid chain: Probable WRKY transcription factor 56 (195 aa).

The span at Met1–Met10 shows a compositional bias: polar residues. 2 disordered regions span residues Met1 to Asn20 and Glu70 to Gly93. Residues Ser108–Glu173 constitute a DNA-binding region (WRKY).

The protein belongs to the WRKY group II-c family.

The protein resides in the nucleus. Functionally, transcription factor. Interacts specifically with the W box (5'-(T)TGAC[CT]-3'), a frequently occurring elicitor-responsive cis-acting element. The sequence is that of Probable WRKY transcription factor 56 (WRKY56) from Arabidopsis thaliana (Mouse-ear cress).